We begin with the raw amino-acid sequence, 717 residues long: Myc proto-oncogene protein (717 aa).

Thr-217 is subject to Phosphothreonine. Ser-220 carries the phosphoserine modification. Disordered stretches follow at residues 288–376 (LNQH…KNNS), 462–535 (TPAS…LKDP), and 555–584 (HSSM…SGQD). Residues 298–311 (QQQLNQQQLDEQQQ) are compositionally biased toward low complexity. Residues 351–360 (KSGSNASITT) are compositionally biased toward polar residues. The segment covering 361–376 (NNNNSNNKNNKLKNNS) has biased composition (low complexity). A compositionally biased stretch (polar residues) spans 462–488 (TPASSSPVKSVANSRYPSPSSTPYQNC). Over residues 489-523 (SSASPSYSPLSVDSSNVSSSSSSSSSQSSFTTSSS) the composition is skewed to low complexity. The tract at residues 625–638 (EKRNQHNDMERQRR) is basic motif. In terms of domain architecture, bHLH spans 625-677 (EKRNQHNDMERQRRIGLKNLFEALKKQIPTIRDKERAPKVNILREAAKLCIQL). A helix-loop-helix motif region spans residues 639–677 (IGLKNLFEALKKQIPTIRDKERAPKVNILREAAKLCIQL).

This sequence belongs to the Myc transcription factor family. As to quaternary structure, efficient DNA binding requires dimerization with another bHLH protein. Binds DNA as a heterodimer with Max. Interacts with ago. Interacts with lid. Part of a complex containing lid, Myc and ash2. Component of a complex with pont and rept. Interacts with puf. Interacts with wh/wuho; the interaction may be mediated by mei-P26 and may be involved in the regulation of ribosome biogenesis. Post-translationally, probably targeted for ubiquitination by the SFC ubiquitin ligase complex member ago, leading to its proteasomal degradation. As to expression, low levels detected throughout embryo before cellular blastoderm formation, particularly concentrated in pole plasm. Zygotic expression detected during cellular blastoderm stage in endodermal anlagen of anterior and posterior midgut at both poles. After gastrulation, expression detected in invaginating ventral furrow of mesoderm. Continued expression in anterior and posterior midgut and mesoderm during germband extension. During late germ-band retraction, expression remains detectable in fusing midgut and presumed developing somatic musculature.

It is found in the nucleus. The protein resides in the nucleolus. It localises to the cytoplasm. Functionally, participates in the regulation of gene transcription. Binds DNA in a non-specific manner, yet also specifically recognizes the core sequence CAC[GA]TG. Seems to activate the transcription of growth-related genes; required for cellular proliferation and growth. Functions in the TORC2-mediated regulation of cell growth, acting downstream of the TORC2 complex. Inhibits the demethylase activity of Lid. Activates transcription of mbm. Has a role in ribosome biogenesis and endoreplication in fat body cells by activating the transcription of LTV1. Able to induce the SCF E3 ubiquitin-protein ligase member archipelago (ago) which functions in its degradation. It may therefore create a negative feedback loop with ago that is regulated by the ubiquitin hydrolase puf. In dopaminergic neurons, regulates dopamine levels by binding to the E-box (E1) of the dopamine decarboxylase Ddc promoter and thereby inhibiting its transcription. This regulation is required to suppress male-male courtship. Involved in the acs and insulin signaling mediated non-cell-autonomous induction of amino acid release into the hemolymph following the cytoplasmic purge response to intestinal bacterial infection; required for efficient recovery of enterocyte thickness. This Drosophila melanogaster (Fruit fly) protein is Myc proto-oncogene protein.